Reading from the N-terminus, the 187-residue chain is Elongation factor P (187 aa).

Belongs to the elongation factor P family.

It is found in the cytoplasm. It functions in the pathway protein biosynthesis; polypeptide chain elongation. Involved in peptide bond synthesis. Stimulates efficient translation and peptide-bond synthesis on native or reconstituted 70S ribosomes in vitro. Probably functions indirectly by altering the affinity of the ribosome for aminoacyl-tRNA, thus increasing their reactivity as acceptors for peptidyl transferase. In Helicobacter pylori (strain G27), this protein is Elongation factor P.